The following is a 185-amino-acid chain: Ribosome-recycling factor (185 aa).

The protein belongs to the RRF family.

It localises to the cytoplasm. Responsible for the release of ribosomes from messenger RNA at the termination of protein biosynthesis. May increase the efficiency of translation by recycling ribosomes from one round of translation to another. This is Ribosome-recycling factor from Mannheimia succiniciproducens (strain KCTC 0769BP / MBEL55E).